The sequence spans 380 residues: L-prolyl-[peptidyl-carrier protein] dehydrogenase (380 aa).

The active-site Proton acceptor is E243. FAD contacts are provided by R269 and Q280.

This sequence belongs to the acyl-CoA dehydrogenase family. FAD serves as cofactor.

It carries out the reaction L-prolyl-[peptidyl-carrier protein] + 2 oxidized [electron-transfer flavoprotein] + H(+) = (1H-pyrrole-2-carbonyl)-[peptidyl-carrier protein] + 2 reduced [electron-transfer flavoprotein]. Functionally, involved in the biosynthesis of pyoluteorin. Catalyzes the desaturation of the L-prolyl-[PltL] to yield 1H-pyrrole-2-carbonyl-[PltL]. The chain is L-prolyl-[peptidyl-carrier protein] dehydrogenase from Pseudomonas fluorescens (strain ATCC BAA-477 / NRRL B-23932 / Pf-5).